Here is a 199-residue protein sequence, read N- to C-terminus: Probable chemoreceptor glutamine deamidase CheD (199 aa).

This sequence belongs to the CheD family.

It carries out the reaction L-glutaminyl-[protein] + H2O = L-glutamyl-[protein] + NH4(+). In terms of biological role, probably deamidates glutamine residues to glutamate on methyl-accepting chemotaxis receptors (MCPs), playing an important role in chemotaxis. In Cereibacter sphaeroides (strain ATCC 17025 / ATH 2.4.3) (Rhodobacter sphaeroides), this protein is Probable chemoreceptor glutamine deamidase CheD.